Reading from the N-terminus, the 1249-residue chain is Calmodulin-regulated spectrin-associated protein 3 (1249 aa).

Disordered stretches follow at residues 183–205 (KTEQ…APAQ), 328–385 (PDGH…SMSH), 430–457 (VSSD…GDLP), 473–609 (LLPD…RLEE), 632–696 (LGKS…HEGL), 714–1029 (QRDM…SALA), and 1061–1111 (NNLG…TGPR). The residue at position 184 (Thr-184) is a Phosphothreonine. The segment covering 189–205 (AQRASPAAPADGAAPAQ) has biased composition (low complexity). Ser-193 is subject to Phosphoserine. Residues 203–312 (PAQPSIRYRK…LVVMLAELFM (110 aa)) form the Calponin-homology (CH) domain. Phosphoserine is present on residues Ser-334, Ser-341, Ser-347, Ser-351, Ser-368, Ser-373, and Ser-382. Over residues 341-352 (SPPQNNSGSSSP) the composition is skewed to low complexity. The span at 364-383 (GGPQSPLRGSTGSLKSSPSM) shows a compositional bias: polar residues. Over residues 437-454 (PPRPAPARTPTQPPPEPG) the composition is skewed to pro residues. A phosphoserine mark is found at Ser-547, Ser-554, and Ser-560. A compositionally biased stretch (basic and acidic residues) spans 568-579 (AERKKQLVKAEA). Positions 594–604 (EALSSEMSELS) are enriched in low complexity. A coiled-coil region spans residues 594-628 (EALSSEMSELSARLEEKRRAIEAQKRRIEAIFAKH). The segment covering 647–657 (GEAEAEAEEAD) has biased composition (acidic residues). Ser-685 is modified (phosphoserine). Positions 696 to 729 (LGEYNRAVSKLSAALSSLQRDMQRLTDQQQRLLA) form a coiled coil. A compositionally biased stretch (pro residues) spans 731–741 (PEAPGSAPPPA). Residues 754–779 (AASPSPARRVPATRRSPGPGPSQSPR) show a composition bias toward low complexity. At Ser-769 the chain carries Phosphoserine. The residue at position 799 (Thr-799) is a Phosphothreonine. Ser-814 is subject to Phosphoserine. Residues 814-825 (SPSQVPVQTRSS) are compositionally biased toward polar residues. The span at 889–940 (YKDEDKPEDEMAQKRASLLERQQRRAEEARRRKQWQEVEKEQRREEAARLAQ) shows a compositional bias: basic and acidic residues. Positions 896–935 (EDEMAQKRASLLERQQRRAEEARRRKQWQEVEKEQRREEA) form a coiled coil. Over residues 950 to 964 (VSAVPMATPAPAARA) the composition is skewed to low complexity. Over residues 970–998 (VGPRKGDFTRQEYERRAQLKLMDDLDKVL) the composition is skewed to basic and acidic residues. Position 1074 is a phosphoserine (Ser-1074). One can recognise a CKK domain in the interval 1109–1243 (GPRLYKEPSA…QGKKPTTPKK (135 aa)).

The protein belongs to the CAMSAP1 family. In terms of assembly, interacts with PLEKHA7. Interacts with CAMSAP2. Interacts with KATNA1 and KATNB1; leading to regulate the length of CAMSAP3-decorated microtubule stretches. Interacts with AKAP9; regulating Golgi assembly in epithelial cells. Interacts with MACF1. Interacts with AKNA.

It localises to the cytoplasm. Its subcellular location is the cytoskeleton. The protein localises to the cell junction. The protein resides in the adherens junction. It is found in the cilium axoneme. It localises to the cilium basal body. In terms of biological role, key microtubule-organizing protein that specifically binds the minus-end of non-centrosomal microtubules and regulates their dynamics and organization. Specifically recognizes growing microtubule minus-ends and autonomously decorates and stabilizes microtubule lattice formed by microtubule minus-end polymerization. Acts on free microtubule minus-ends that are not capped by microtubule-nucleating proteins or other factors and protects microtubule minus-ends from depolymerization. In addition, it also reduces the velocity of microtubule polymerization. Required for the biogenesis and the maintenance of zonula adherens by anchoring the minus-end of microtubules to zonula adherens and by recruiting the kinesin KIFC3 to those junctional sites. Required for orienting the apical-to-basal polarity of microtubules in epithelial cells: acts by tethering non-centrosomal microtubules to the apical cortex, leading to their longitudinal orientation. Plays a key role in early embryos, which lack centrosomes: accumulates at the microtubule bridges that connect pairs of cells and enables the formation of a non-centrosomal microtubule-organizing center that directs intracellular transport in the early embryo. Couples non-centrosomal microtubules with actin: interaction with MACF1 at the minus ends of non-centrosomal microtubules, tethers the microtubules to actin filaments, regulating focal adhesion size and cell migration. Plays a key role in the generation of non-centrosomal microtubules by accumulating in the pericentrosomal region and cooperating with KATNA1 to release non-centrosomal microtubules from the centrosome. Through the microtubule cytoskeleton, also regulates the organization of cellular organelles including the Golgi and the early endosomes. Through interaction with AKAP9, involved in translocation of Golgi vesicles in epithelial cells, where microtubules are mainly non-centrosomal. Plays an important role in motile cilia function by facilitatating proper orientation of basal bodies and formation of central microtubule pairs in motile cilia. The protein is Calmodulin-regulated spectrin-associated protein 3 of Homo sapiens (Human).